Here is a 377-residue protein sequence, read N- to C-terminus: GDP-mannose 3,5-epimerase (377 aa).

Residue Gly2 is modified to N-acetylglycine. NAD(+) is bound by residues 34–60 (GAGG…SDWK), Asp58, and Asp78. Substrate is bound by residues Gly103 and 143–145 (SAC). Positions 174 and 178 each coordinate NAD(+). Tyr174 functions as the Proton acceptor in the catalytic mechanism. Substrate is bound by residues Asn203, 216-218 (EKA), Lys225, 241-243 (QTR), Arg306, and Ser356. Ser369 carries the phosphoserine modification.

It belongs to the NAD(P)-dependent epimerase/dehydratase family. In terms of assembly, homodimer. Interacts with chaperone Hsc70-3 protein, which may regulate epimerase activity. NAD(+) serves as cofactor.

The catalysed reaction is GDP-alpha-D-mannose = GDP-beta-L-gulose. It carries out the reaction GDP-beta-L-gulose = GDP-beta-L-galactose. It participates in cofactor biosynthesis; L-ascorbate biosynthesis via GDP-alpha-D-mannose pathway; L-ascorbate from GDP-alpha-D-mannose: step 1/5. With respect to regulation, inhibited by GDP and GDP-D-glucose. Its function is as follows. Catalyzes a reversible epimerization of GDP-D-mannose that precedes the committed step in the biosynthesis of vitamin C (L-ascorbate), resulting in the hydrolysis of the highly energetic glycosyl-pyrophosphoryl linkage. Able to catalyze 2 distinct epimerization reactions and can release both GDP-L-galactose and GDP-L-gulose from GDP-mannose. The chain is GDP-mannose 3,5-epimerase from Arabidopsis thaliana (Mouse-ear cress).